We begin with the raw amino-acid sequence, 304 residues long: Recombination-associated protein RdgC (304 aa).

Belongs to the RdgC family.

The protein resides in the cytoplasm. It is found in the nucleoid. In terms of biological role, may be involved in recombination. The polypeptide is Recombination-associated protein RdgC (Shewanella sp. (strain W3-18-1)).